A 416-amino-acid chain; its full sequence is NADH-quinone oxidoreductase subunit H (416 aa).

The next 9 helical transmembrane spans lie at 16–36 (LILA…LAAI), 84–104 (PVYL…FAVI), 124–144 (LAVA…GIVL), 165–185 (VVSY…YAGT), 197–217 (STWY…SMVG), 260–280 (VSAL…PISL), 288–308 (WWPL…YIWL), 320–340 (FMAI…MIVA), and 353–373 (WASG…VILW).

This sequence belongs to the complex I subunit 1 family. NDH-1 is composed of 14 different subunits. Subunits NuoA, H, J, K, L, M, N constitute the membrane sector of the complex.

It localises to the cell membrane. The catalysed reaction is a quinone + NADH + 5 H(+)(in) = a quinol + NAD(+) + 4 H(+)(out). NDH-1 shuttles electrons from NADH, via FMN and iron-sulfur (Fe-S) centers, to quinones in the respiratory chain. The immediate electron acceptor for the enzyme in this species is believed to be menaquinone. Couples the redox reaction to proton translocation (for every two electrons transferred, four hydrogen ions are translocated across the cytoplasmic membrane), and thus conserves the redox energy in a proton gradient. This subunit may bind ubiquinone. The polypeptide is NADH-quinone oxidoreductase subunit H (Mycobacterium sp. (strain KMS)).